The sequence spans 146 residues: MAQLLMVTVTFGCISLLYLLPGTLSGSLGKGLRPREPPAKIPSSGPQPGHPSLRPVVWKPPHALQPQGRGNPALATVHLPQGGGSRHPGPQRHVGSRRPHAQLLRVGCVLGTCQVQNLSHRLWQLVRPSGRRDSAPVDPSSPHSYG.

The signal sequence occupies residues 1 to 25; the sequence is MAQLLMVTVTFGCISLLYLLPGTLS. The propeptide occupies 26-96; that stretch reads GSLGKGLRPR…HPGPQRHVGS (71 aa). Positions 29 to 99 are disordered; the sequence is GKGLRPREPP…PQRHVGSRRP (71 aa). An intrachain disulfide couples C108 to C113. A Tyrosine amide modification is found at Y145.

The protein belongs to the adrenomedullin family. Expression was restricted to the intermediate and anterior lobes of the pituitary.

The protein resides in the secreted. Functionally, intermedin/ADM2 is a peptide hormone that plays a role as physiological regulator of gastrointestinal and cardiovascular bioactivities mediated by the CALCRL-RAMPs receptor complexes. Activates the cAMP-dependent pathway through interaction with CALCRL-RAMP3 receptor complex. This chain is Protein ADM2, found in Rattus norvegicus (Rat).